We begin with the raw amino-acid sequence, 498 residues long: Elastase (498 aa).

Residues Met1–Ala23 form the signal peptide. Positions Ala24–His197 are excised as a propeptide. Cys227 and Cys255 are joined by a disulfide. Asp333 provides a ligand contact to Ca(2+). His337 contributes to the Zn(2+) binding site. Glu338 is an active-site residue. His341 and Glu361 together coordinate Zn(2+). 4 residues coordinate Ca(2+): Glu369, Glu372, Asp380, and Leu382. His420 acts as the Proton donor in catalysis. A disulfide bond links Cys467 and Cys494.

It belongs to the peptidase M4 family. As to quaternary structure, monomer. Ca(2+) is required as a cofactor. Requires Zn(2+) as cofactor. In terms of processing, made as a membrane-associated pre-pro-protein, which is exported to the periplasm (yielding pro-elastase) with removal of the signal peptide. Under certain conditions pro-elastase can accumulate. The pro-peptide is removed in the periplasm yielding a (mature length) 33 kDa protein, probably by autocatalysis. The pro-peptide probably remains associated with elastase and can be secreted. Further alterations (perhaps processing) seems to be required before secretion into the extracellular space.

It localises to the secreted. It carries out the reaction Hydrolysis of proteins including elastin, collagen types III and IV, fibronectin and immunoglobulin A, generally with bulky hydrophobic group at P1'. Insulin B chain cleavage pattern identical to that of thermolysin, but specificity differs in other respects.. With respect to regulation, inhibited by phosphoramidon. Cleaves host elastin, collagen, IgG, and several complement components as well as endogenous pro-aminopeptidase. Autocatalyses processing of its pro-peptide. Processes the pro-peptide of pro-chitin-binding protein (cbpD). Involved in the pathogenesis of P.aeruginosa infections. In Pseudomonas aeruginosa (strain ATCC 15692 / DSM 22644 / CIP 104116 / JCM 14847 / LMG 12228 / 1C / PRS 101 / PAO1), this protein is Elastase (lasB).